Here is a 453-residue protein sequence, read N- to C-terminus: NADH-quinone oxidoreductase subunit D (453 aa).

Positions 1 to 21 (MKDTETRPGRHRAPEPAHPEQ) are enriched in basic and acidic residues. The tract at residues 1–30 (MKDTETRPGRHRAPEPAHPEQPDTTGDTVV) is disordered.

The protein belongs to the complex I 49 kDa subunit family. In terms of assembly, NDH-1 is composed of 14 different subunits. Subunits NuoB, C, D, E, F, and G constitute the peripheral sector of the complex.

The protein localises to the cell membrane. It catalyses the reaction a quinone + NADH + 5 H(+)(in) = a quinol + NAD(+) + 4 H(+)(out). In terms of biological role, NDH-1 shuttles electrons from NADH, via FMN and iron-sulfur (Fe-S) centers, to quinones in the respiratory chain. The immediate electron acceptor for the enzyme in this species is believed to be a menaquinone. Couples the redox reaction to proton translocation (for every two electrons transferred, four hydrogen ions are translocated across the cytoplasmic membrane), and thus conserves the redox energy in a proton gradient. The chain is NADH-quinone oxidoreductase subunit D from Nocardia farcinica (strain IFM 10152).